We begin with the raw amino-acid sequence, 770 residues long: Low-density lipoprotein receptor-related protein 3 (770 aa).

An N-terminal signal peptide occupies residues 1–36; it reads MEKRAAAGLEGAPGARAQLAVVCLVNIFLTGRLSSA. The Extracellular segment spans residues 37–496; it reads VPALAACSGK…HGCLAAVPRK (460 aa). 9 disulfide bridges follow: C43–C72, C99–C120, C166–C178, C173–C191, C185–C200, C212–C227, C219–C240, C234–C249, and C254–C282. The CUB 1 domain occupies 43–159; it reads CSGKLEQHTE…QGFRLSYIRG (117 aa). A glycan (N-linked (GlcNAc...) asparagine) is linked at N71. 2 LDL-receptor class A domains span residues 165 to 201 and 211 to 250; these read SCQA…GNCS and LCPG…AGCP. N199 carries N-linked (GlcNAc...) asparagine glycosylation. In terms of domain architecture, CUB 2 spans 254 to 365; sequence CGRRLGSFYG…HGFNATYQVK (112 aa). N-linked (GlcNAc...) asparagine glycosylation occurs at N359. 2 consecutive LDL-receptor class A domains span residues 415 to 453 and 454 to 490; these read ACPP…KNCF and SCQP…HGCL. Intrachain disulfides connect C416-C430, C423-C443, C437-C452, C455-C467, C462-C480, and C474-C489. The chain crosses the membrane as a helical span at residues 497–517; sequence VITAALIGSLVCGLLLVIALG. Topologically, residues 518–770 are cytoplasmic; it reads CAFKLYSLRT…ASDDEALLVC (253 aa). Positions 635–770 are disordered; the sequence is LGDGFLQPAP…ASDDEALLVC (136 aa). Positions 689 to 707 are enriched in basic and acidic residues; that stretch reads RDPECRPVDKDRKVCREPL. A compositionally biased stretch (polar residues) spans 729–738; it reads QVSTASSTLG. A compositionally biased stretch (acidic residues) spans 761–770; sequence ASDDEALLVC.

This sequence belongs to the LDLR family. Binds GGA1 and GGA2. In terms of tissue distribution, widely expressed. Highly expressed in skeletal muscle and ovary. Expressed at intermediate level in heart, brain, liver, pancreas, prostate and small intestine. Weakly expressed in testis, colon and leukocyte.

It is found in the membrane. The protein resides in the coated pit. In terms of biological role, probable receptor, which may be involved in the internalization of lipophilic molecules and/or signal transduction. Its precise role is however unclear, since it does not bind to very low density lipoprotein (VLDL) or to LRPAP1 in vitro. In Homo sapiens (Human), this protein is Low-density lipoprotein receptor-related protein 3 (LRP3).